We begin with the raw amino-acid sequence, 177 residues long: Adenine phosphoribosyltransferase (177 aa).

It belongs to the purine/pyrimidine phosphoribosyltransferase family. As to quaternary structure, homodimer.

The protein resides in the cytoplasm. It catalyses the reaction AMP + diphosphate = 5-phospho-alpha-D-ribose 1-diphosphate + adenine. It participates in purine metabolism; AMP biosynthesis via salvage pathway; AMP from adenine: step 1/1. Its function is as follows. Catalyzes a salvage reaction resulting in the formation of AMP, that is energically less costly than de novo synthesis. This Chlorobium phaeobacteroides (strain BS1) protein is Adenine phosphoribosyltransferase.